Here is a 212-residue protein sequence, read N- to C-terminus: Glycerol-3-phosphate acyltransferase (212 aa).

6 consecutive transmembrane segments (helical) span residues 8 to 28, 59 to 79, 90 to 110, 122 to 142, 148 to 168, and 169 to 189; these read IFLS…PFAV, AAAA…LWLA, VFAL…FLGF, ILLA…VIIA, SSLA…FGSG, and VAWY…LLLF.

The protein belongs to the PlsY family. Probably interacts with PlsX.

Its subcellular location is the cell inner membrane. It carries out the reaction an acyl phosphate + sn-glycerol 3-phosphate = a 1-acyl-sn-glycero-3-phosphate + phosphate. Its pathway is lipid metabolism; phospholipid metabolism. In terms of biological role, catalyzes the transfer of an acyl group from acyl-phosphate (acyl-PO(4)) to glycerol-3-phosphate (G3P) to form lysophosphatidic acid (LPA). This enzyme utilizes acyl-phosphate as fatty acyl donor, but not acyl-CoA or acyl-ACP. The polypeptide is Glycerol-3-phosphate acyltransferase (Bordetella petrii (strain ATCC BAA-461 / DSM 12804 / CCUG 43448)).